Here is a 453-residue protein sequence, read N- to C-terminus: Bifunctional protein GlmU (453 aa).

Positions 1-227 (MNKLSVVILA…LMEVEGVNNR (227 aa)) are pyrophosphorylase. Residues 9–12 (LAAG), Lys23, Gln74, 79–80 (GT), 101–103 (YGD), Gly138, Glu152, Asn167, and Asn225 each bind UDP-N-acetyl-alpha-D-glucosamine. Asp103 contacts Mg(2+). Asn225 contributes to the Mg(2+) binding site. The tract at residues 228–248 (LQLANLERHYQRKQVEKLLLA) is linker. Positions 249-453 (GVTFADPARF…ISNWQRPKRK (205 aa)) are N-acetyltransferase. 2 residues coordinate UDP-N-acetyl-alpha-D-glucosamine: Arg331 and Lys349. The active-site Proton acceptor is His361. UDP-N-acetyl-alpha-D-glucosamine-binding residues include Tyr364 and Asn375. Acetyl-CoA-binding positions include Ala378, 384-385 (NY), Ser403, Ala421, and Arg438.

This sequence in the N-terminal section; belongs to the N-acetylglucosamine-1-phosphate uridyltransferase family. It in the C-terminal section; belongs to the transferase hexapeptide repeat family. In terms of assembly, homotrimer. Requires Mg(2+) as cofactor.

The protein localises to the cytoplasm. It catalyses the reaction alpha-D-glucosamine 1-phosphate + acetyl-CoA = N-acetyl-alpha-D-glucosamine 1-phosphate + CoA + H(+). It carries out the reaction N-acetyl-alpha-D-glucosamine 1-phosphate + UTP + H(+) = UDP-N-acetyl-alpha-D-glucosamine + diphosphate. It participates in nucleotide-sugar biosynthesis; UDP-N-acetyl-alpha-D-glucosamine biosynthesis; N-acetyl-alpha-D-glucosamine 1-phosphate from alpha-D-glucosamine 6-phosphate (route II): step 2/2. Its pathway is nucleotide-sugar biosynthesis; UDP-N-acetyl-alpha-D-glucosamine biosynthesis; UDP-N-acetyl-alpha-D-glucosamine from N-acetyl-alpha-D-glucosamine 1-phosphate: step 1/1. The protein operates within bacterial outer membrane biogenesis; LPS lipid A biosynthesis. In terms of biological role, catalyzes the last two sequential reactions in the de novo biosynthetic pathway for UDP-N-acetylglucosamine (UDP-GlcNAc). The C-terminal domain catalyzes the transfer of acetyl group from acetyl coenzyme A to glucosamine-1-phosphate (GlcN-1-P) to produce N-acetylglucosamine-1-phosphate (GlcNAc-1-P), which is converted into UDP-GlcNAc by the transfer of uridine 5-monophosphate (from uridine 5-triphosphate), a reaction catalyzed by the N-terminal domain. In Histophilus somni (strain 2336) (Haemophilus somnus), this protein is Bifunctional protein GlmU.